The chain runs to 1581 residues: Pentafunctional AROM polypeptide (1581 aa).

Residues 1–384 (MPEPTKISIL…YEPKASVVPN (384 aa)) are 3-dehydroquinate synthase. Residues 44–46 (DTN), 81–84 (EVSK), 114–116 (GGV), and aspartate 119 contribute to the NAD(+) site. Arginine 130 contributes to the 7-phospho-2-dehydro-3-deoxy-D-arabino-heptonate binding site. An NAD(+)-binding site is contributed by 139–140 (TT). Aspartate 146 and lysine 152 together coordinate 7-phospho-2-dehydro-3-deoxy-D-arabino-heptonate. Lysine 161 is a binding site for NAD(+). Residue asparagine 162 coordinates 7-phospho-2-dehydro-3-deoxy-D-arabino-heptonate. Residues 179–182 (FLET) and asparagine 190 each bind NAD(+). Glutamate 194 contacts Zn(2+). 7-phospho-2-dehydro-3-deoxy-D-arabino-heptonate-binding positions include 194–197 (EVIK) and lysine 250. The active-site Proton acceptor; for 3-dehydroquinate synthase activity is the glutamate 260. 7-phospho-2-dehydro-3-deoxy-D-arabino-heptonate-binding positions include 264 to 268 (RNLLN) and histidine 271. Position 271 (histidine 271) interacts with Zn(2+). The active-site Proton acceptor; for 3-dehydroquinate synthase activity is the histidine 275. 7-phospho-2-dehydro-3-deoxy-D-arabino-heptonate is bound by residues histidine 287 and lysine 356. Zn(2+) is bound at residue histidine 287. The tract at residues 397–842 (VHPGVPKESN…WDTLRQLFSV (446 aa)) is EPSP synthase. Cysteine 824 (for EPSP synthase activity) is an active-site residue. Residues 864 to 1056 (SASVFIIGMR…KQKKHSFFVS (193 aa)) form a shikimate kinase region. Residue 871–878 (GMRGAGKT) participates in ATP binding. Positions 1057–1277 (LTLPDLRSAS…AAPGQLSATE (221 aa)) are 3-dehydroquinase. Histidine 1180 functions as the Proton acceptor; for 3-dehydroquinate dehydratase activity in the catalytic mechanism. Lysine 1208 (schiff-base intermediate with substrate; for 3-dehydroquinate dehydratase activity) is an active-site residue. Positions 1290–1581 (KKRFAIFGNP…ARTAVLGDSA (292 aa)) are shikimate dehydrogenase.

This sequence in the N-terminal section; belongs to the sugar phosphate cyclases superfamily. Dehydroquinate synthase family. In the 2nd section; belongs to the EPSP synthase family. The protein in the 3rd section; belongs to the shikimate kinase family. It in the 4th section; belongs to the type-I 3-dehydroquinase family. This sequence in the C-terminal section; belongs to the shikimate dehydrogenase family. Homodimer. The cofactor is Zn(2+).

It localises to the cytoplasm. It catalyses the reaction 7-phospho-2-dehydro-3-deoxy-D-arabino-heptonate = 3-dehydroquinate + phosphate. The catalysed reaction is 3-dehydroquinate = 3-dehydroshikimate + H2O. It carries out the reaction shikimate + NADP(+) = 3-dehydroshikimate + NADPH + H(+). The enzyme catalyses shikimate + ATP = 3-phosphoshikimate + ADP + H(+). It catalyses the reaction 3-phosphoshikimate + phosphoenolpyruvate = 5-O-(1-carboxyvinyl)-3-phosphoshikimate + phosphate. Its pathway is metabolic intermediate biosynthesis; chorismate biosynthesis; chorismate from D-erythrose 4-phosphate and phosphoenolpyruvate: step 2/7. It participates in metabolic intermediate biosynthesis; chorismate biosynthesis; chorismate from D-erythrose 4-phosphate and phosphoenolpyruvate: step 3/7. The protein operates within metabolic intermediate biosynthesis; chorismate biosynthesis; chorismate from D-erythrose 4-phosphate and phosphoenolpyruvate: step 4/7. It functions in the pathway metabolic intermediate biosynthesis; chorismate biosynthesis; chorismate from D-erythrose 4-phosphate and phosphoenolpyruvate: step 5/7. Its pathway is metabolic intermediate biosynthesis; chorismate biosynthesis; chorismate from D-erythrose 4-phosphate and phosphoenolpyruvate: step 6/7. Functionally, the AROM polypeptide catalyzes 5 consecutive enzymatic reactions in prechorismate polyaromatic amino acid biosynthesis. The protein is Pentafunctional AROM polypeptide of Aspergillus terreus (strain NIH 2624 / FGSC A1156).